Here is a 175-residue protein sequence, read N- to C-terminus: Alkyl hydroperoxide reductase AhpD (175 aa).

The active-site Proton donor is C130. An intrachain disulfide couples C130 to C133. C133 acts as the Cysteine sulfenic acid (-SOH) intermediate in catalysis.

This sequence belongs to the AhpD family. In terms of assembly, homotrimer.

The catalysed reaction is N(6)-[(R)-dihydrolipoyl]-L-lysyl-[lipoyl-carrier protein] + a hydroperoxide = N(6)-[(R)-lipoyl]-L-lysyl-[lipoyl-carrier protein] + an alcohol + H2O. In terms of biological role, antioxidant protein with alkyl hydroperoxidase activity. Required for the reduction of the AhpC active site cysteine residues and for the regeneration of the AhpC enzyme activity. In Mycobacteroides abscessus (strain ATCC 19977 / DSM 44196 / CCUG 20993 / CIP 104536 / JCM 13569 / NCTC 13031 / TMC 1543 / L948) (Mycobacterium abscessus), this protein is Alkyl hydroperoxide reductase AhpD.